Reading from the N-terminus, the 364-residue chain is Aminomethyltransferase (364 aa).

This sequence belongs to the GcvT family. As to quaternary structure, the glycine cleavage system is composed of four proteins: P, T, L and H.

It catalyses the reaction N(6)-[(R)-S(8)-aminomethyldihydrolipoyl]-L-lysyl-[protein] + (6S)-5,6,7,8-tetrahydrofolate = N(6)-[(R)-dihydrolipoyl]-L-lysyl-[protein] + (6R)-5,10-methylene-5,6,7,8-tetrahydrofolate + NH4(+). In terms of biological role, the glycine cleavage system catalyzes the degradation of glycine. The chain is Aminomethyltransferase from Shewanella baltica (strain OS155 / ATCC BAA-1091).